The chain runs to 397 residues: pH-sensitive adenylate cyclase MT1302 (397 aa).

The segment at 1–191 (MTDHVREADD…IQDMLFMQLR (191 aa)) is regulatory domain. The segment at 192–206 (HMMETEAVNAGERAA) is linker. The tract at residues 211 to 397 (PGARQVTVAF…QDDDLAGSSP (187 aa)) is catalytic domain. The region spanning 217-325 (TVAFADLVGF…SPVNVASRVT (109 aa)) is the Guanylate cyclase domain. Asp-222 contributes to the Mn(2+) binding site. Lys-261 contributes to the substrate binding site. Asp-265 lines the Mn(2+) pocket. Arg-298 contacts ATP. Asp-312 is a substrate binding site.

This sequence belongs to the adenylyl cyclase class-4/guanylyl cyclase family. Homodimer. Requires Mn(2+) as cofactor. Mg(2+) is required as a cofactor.

It carries out the reaction ATP = 3',5'-cyclic AMP + diphosphate. Its function is as follows. Catalyzes the formation of the second messenger cAMP. The protein is pH-sensitive adenylate cyclase MT1302 of Mycobacterium tuberculosis (strain CDC 1551 / Oshkosh).